The primary structure comprises 101 residues: Phosphoribosyl-AMP cyclohydrolase (101 aa).

Residue Asp71 participates in Mg(2+) binding. Cys72 is a binding site for Zn(2+). The Mg(2+) site is built by Asp73 and Asp75. The Zn(2+) site is built by Cys88 and Cys95.

Belongs to the PRA-CH family. In terms of assembly, homodimer. Mg(2+) serves as cofactor. It depends on Zn(2+) as a cofactor.

It localises to the cytoplasm. The catalysed reaction is 1-(5-phospho-beta-D-ribosyl)-5'-AMP + H2O = 1-(5-phospho-beta-D-ribosyl)-5-[(5-phospho-beta-D-ribosylamino)methylideneamino]imidazole-4-carboxamide. It participates in amino-acid biosynthesis; L-histidine biosynthesis; L-histidine from 5-phospho-alpha-D-ribose 1-diphosphate: step 3/9. In terms of biological role, catalyzes the hydrolysis of the adenine ring of phosphoribosyl-AMP. In Bacillus cereus (strain Q1), this protein is Phosphoribosyl-AMP cyclohydrolase.